A 143-amino-acid polypeptide reads, in one-letter code: Large ribosomal subunit protein uL11 (143 aa).

The protein belongs to the universal ribosomal protein uL11 family. As to quaternary structure, part of the ribosomal stalk of the 50S ribosomal subunit. Interacts with L10 and the large rRNA to form the base of the stalk. L10 forms an elongated spine to which L12 dimers bind in a sequential fashion forming a multimeric L10(L12)X complex. In terms of processing, one or more lysine residues are methylated.

Its function is as follows. Forms part of the ribosomal stalk which helps the ribosome interact with GTP-bound translation factors. The sequence is that of Large ribosomal subunit protein uL11 from Thiobacillus denitrificans (strain ATCC 25259 / T1).